Here is a 61-residue protein sequence, read N- to C-terminus: Photosystem II reaction center protein Z (61 aa).

A run of 2 helical transmembrane segments spans residues 5–25 (LTAL…VALA) and 38–58 (TKGF…DGVA).

Belongs to the PsbZ family. In terms of assembly, PSII is composed of 1 copy each of membrane proteins PsbA, PsbB, PsbC, PsbD, PsbE, PsbF, PsbH, PsbI, PsbJ, PsbK, PsbL, PsbM, PsbT, PsbX, PsbY, PsbZ, Psb30/Ycf12, at least 3 peripheral proteins of the oxygen-evolving complex and a large number of cofactors. It forms dimeric complexes.

The protein localises to the plastid. It localises to the chloroplast thylakoid membrane. Functionally, may control the interaction of photosystem II (PSII) cores with the light-harvesting antenna, regulates electron flow through the 2 photosystem reaction centers. PSII is a light-driven water plastoquinone oxidoreductase, using light energy to abstract electrons from H(2)O, generating a proton gradient subsequently used for ATP formation. In Phaeodactylum tricornutum (strain CCAP 1055/1), this protein is Photosystem II reaction center protein Z.